Here is a 124-residue protein sequence, read N- to C-terminus: Fluoride-specific ion channel FluC (124 aa).

A run of 4 helical transmembrane segments spans residues 3–23, 36–56, 66–86, and 100–120; these read YLLV…INTV, TFFI…YFAF, LFLM…SLDA, and LYVL…LALI. Residues Gly-74 and Thr-77 each coordinate Na(+).

It belongs to the fluoride channel Fluc/FEX (TC 1.A.43) family.

Its subcellular location is the cell inner membrane. It carries out the reaction fluoride(in) = fluoride(out). Na(+) is not transported, but it plays an essential structural role and its presence is essential for fluoride channel function. Its function is as follows. Fluoride-specific ion channel. Important for reducing fluoride concentration in the cell, thus reducing its toxicity. This chain is Fluoride-specific ion channel FluC, found in Rhodopseudomonas palustris (strain BisB5).